A 444-amino-acid chain; its full sequence is Probable D-serine dehydratase (444 aa).

The residue at position 118 (Lys118) is an N6-(pyridoxal phosphate)lysine.

This sequence belongs to the serine/threonine dehydratase family. DsdA subfamily. Requires pyridoxal 5'-phosphate as cofactor.

The enzyme catalyses D-serine = pyruvate + NH4(+). This is Probable D-serine dehydratase from Acinetobacter baumannii (strain ATCC 17978 / DSM 105126 / CIP 53.77 / LMG 1025 / NCDC KC755 / 5377).